The primary structure comprises 162 residues: Anaerobic nitrite reductase (162 aa).

N-acetylserine is present on Ser-2. The Globin domain occupies 9–158 (VFTEEQEALV…LVAAIKFEMK (150 aa)). The short motif at 42–46 (EIAPS) is the Homodimerization element. The heme b site is built by Ser-52, Lys-66, His-70, Arg-100, and His-105. The Homodimerization signature appears at 112–124 (NEHFEVTRFALLE).

Belongs to the plant globin family. As to quaternary structure, homodimer with distinct heme coordination in each subunits. Heme b serves as cofactor. Root nodules.

It localises to the cytoplasm. The protein resides in the nucleus. The enzyme catalyses Fe(III)-heme b-[protein] + nitric oxide + H2O = Fe(II)-heme b-[protein] + nitrite + 2 H(+). In terms of biological role, phytoglobin that reduces nitrite to nitric oxide (NO) under anoxic conditions (e.g. during flooding or in waterlogged soil) and upon root nodulation. Required for general plant development and during nodulation, especially for the onset of symbiosis. Monitors nitric oxide (NO) levels during early phase of the nitrogen-fixing symbiosis and buffers oxygen in functioning nodules. May not function as an oxygen storage or transport protein. Has an unusually high affinity for O(2) through a hexacoordinate heme iron because of a very low dissociation constant. In Parasponia andersonii (Sponia andersonii), this protein is Anaerobic nitrite reductase.